A 286-amino-acid polypeptide reads, in one-letter code: tRNA uridine(34) hydroxylase (286 aa).

Residues Arg-130–Leu-225 form the Rhodanese domain. Residue Cys-185 is the Cysteine persulfide intermediate of the active site.

It belongs to the TrhO family.

It catalyses the reaction uridine(34) in tRNA + AH2 + O2 = 5-hydroxyuridine(34) in tRNA + A + H2O. Functionally, catalyzes oxygen-dependent 5-hydroxyuridine (ho5U) modification at position 34 in tRNAs. The polypeptide is tRNA uridine(34) hydroxylase (Rhodococcus erythropolis (strain PR4 / NBRC 100887)).